Here is a 212-residue protein sequence, read N- to C-terminus: MHILVTGFAPFDNQDINPSWEAVTQLENIIGTHTIDKLKLPTSFKKVDTIINKTLASNHYDVVLAIGQAGGRNAITPERVAINIDDARIPDNDDFQPIDQAIHLDGAPRYFSNLPVKAMTQSVINQGLPGALSNSAGTFVCNHVLYHLGYLQDKHYPHLRFGFIHVPYIPEQVVGKSDTPSMPLEQIVAGLTAAIEAISDHDDLRIALGTTE.

Residues Glu-78, Cys-141, and His-165 contribute to the active site.

It belongs to the peptidase C15 family. Homotetramer.

The protein resides in the cytoplasm. The catalysed reaction is Release of an N-terminal pyroglutamyl group from a polypeptide, the second amino acid generally not being Pro.. Functionally, removes 5-oxoproline from various penultimate amino acid residues except L-proline. The chain is Pyrrolidone-carboxylate peptidase (pcp) from Staphylococcus aureus.